A 1011-amino-acid chain; its full sequence is Multiple C2 domain and transmembrane region protein 7 (1011 aa).

A C2 1 domain is found at 1 to 110; the sequence is MMMSNLKLGV…PHSDAVVLHF (110 aa). A compositionally biased stretch (polar residues) spans 178–195; that stretch reads QEHQHQHPQGPNQSSSLA. Residues 178–201 form a disordered region; sequence QEHQHQHPQGPNQSSSLAAEQDNH. C2 domains follow at residues 261–381, 421–546, and 587–709; these read IHKD…PQWY, VDCS…ARWY, and YSSD…THSY. 5 residues coordinate Ca(2+): D294, D300, D347, D349, and D354. 3 helical membrane-spanning segments follow: residues 812–832, 846–866, and 954–974; these read MMTV…ICSW, LMLV…MFLI, and IFVI…IQIV.

It belongs to the MCTP family. Requires Ca(2+) as cofactor. In terms of tissue distribution, accumulates specifically in hydathodes. Restricted the basal meristem of roots. Observed in flowers.

It is found in the membrane. The protein localises to the vesicle. It localises to the endosome membrane. May function as a signaling molecule by regulating the trafficking of other regulators. This chain is Multiple C2 domain and transmembrane region protein 7, found in Arabidopsis thaliana (Mouse-ear cress).